A 243-amino-acid chain; its full sequence is MPTEIAPRDRLIVALDLPGVAEAEAMITRLGDAVTFYKIGMELTYAGGLGLAERLAADGKQVFMDLKLHDIPNTVERATRQIARLGARFLTVHGFSQSMTAALAGAAGSPLELLAVTVMTSYDDADLAAAGYAMGVKELVARRAVQAKQIGIHGLILSPEETQLVRPLVGPDMQLVTPGIRPAGSDVGDQKRIMTPALAIAGGADRLVVGRPVTGAADPAAAAESIVADIASALALVGKTNRT.

Residues aspartate 16, lysine 38, aspartate 65 to threonine 74, threonine 120, arginine 181, glutamine 190, glycine 210, and arginine 211 contribute to the substrate site. The active-site Proton donor is the lysine 67.

It belongs to the OMP decarboxylase family. Type 1 subfamily. Homodimer.

The enzyme catalyses orotidine 5'-phosphate + H(+) = UMP + CO2. It functions in the pathway pyrimidine metabolism; UMP biosynthesis via de novo pathway; UMP from orotate: step 2/2. In terms of biological role, catalyzes the decarboxylation of orotidine 5'-monophosphate (OMP) to uridine 5'-monophosphate (UMP). This chain is Orotidine 5'-phosphate decarboxylase, found in Bradyrhizobium sp. (strain BTAi1 / ATCC BAA-1182).